Here is a 217-residue protein sequence, read N- to C-terminus: Small ribosomal subunit protein uS3 (217 aa).

One can recognise a KH type-2 domain in the interval 38 to 106; the sequence is IRKFIDNELK…KVHINVIEIK (69 aa).

It belongs to the universal ribosomal protein uS3 family. Part of the 30S ribosomal subunit. Forms a tight complex with proteins S10 and S14.

Functionally, binds the lower part of the 30S subunit head. Binds mRNA in the 70S ribosome, positioning it for translation. The sequence is that of Small ribosomal subunit protein uS3 from Staphylococcus aureus (strain MSSA476).